Reading from the N-terminus, the 184-residue chain is Putative F-box protein At4g22420 (184 aa).

An F-box domain is found at 1–46 (MAECPTDLINEMFLRLRATTLKKCRVLSKPCFSLIDSPEKRVIERS). Residues 68-126 (DDDEEEGNELKKSQARRNGVAKGEGNGNKVNGEAQEEVDDEEDDDDDASKGRGKHSRHV) form a disordered region. Over residues 85–100 (NGVAKGEGNGNKVNGE) the composition is skewed to low complexity. Acidic residues predominate over residues 101 to 114 (AQEEVDDEEDDDDD).

The sequence is that of Putative F-box protein At4g22420 from Arabidopsis thaliana (Mouse-ear cress).